The following is a 185-amino-acid chain: Transcription termination/antitermination protein NusG (185 aa).

Positions 134-163 constitute a KOW domain; it reads VGQQVRIVEGPFATFSGEVEEVMSERNKVR.

Belongs to the NusG family.

In terms of biological role, participates in transcription elongation, termination and antitermination. This Treponema pallidum (strain Nichols) protein is Transcription termination/antitermination protein NusG.